A 104-amino-acid chain; its full sequence is Large ribosomal subunit protein uL24 (104 aa).

Belongs to the universal ribosomal protein uL24 family. In terms of assembly, part of the 50S ribosomal subunit.

Its function is as follows. One of two assembly initiator proteins, it binds directly to the 5'-end of the 23S rRNA, where it nucleates assembly of the 50S subunit. In terms of biological role, one of the proteins that surrounds the polypeptide exit tunnel on the outside of the subunit. The chain is Large ribosomal subunit protein uL24 from Hydrogenovibrio crunogenus (strain DSM 25203 / XCL-2) (Thiomicrospira crunogena).